Reading from the N-terminus, the 354-residue chain is Methylthioribose-1-phosphate isomerase (354 aa).

Residues 58-60 (RGA), Arg101, and Gln204 each bind substrate. Asp245 acts as the Proton donor in catalysis. 255 to 256 (NK) contacts substrate.

The protein belongs to the eIF-2B alpha/beta/delta subunits family. MtnA subfamily.

It catalyses the reaction 5-(methylsulfanyl)-alpha-D-ribose 1-phosphate = 5-(methylsulfanyl)-D-ribulose 1-phosphate. It participates in amino-acid biosynthesis; L-methionine biosynthesis via salvage pathway; L-methionine from S-methyl-5-thio-alpha-D-ribose 1-phosphate: step 1/6. In terms of biological role, catalyzes the interconversion of methylthioribose-1-phosphate (MTR-1-P) into methylthioribulose-1-phosphate (MTRu-1-P). The polypeptide is Methylthioribose-1-phosphate isomerase (Xylella fastidiosa (strain M12)).